The chain runs to 194 residues: Erythropoietin (194 aa).

Residues 1–26 (MGARECPARLLLLSLLLLPLGLPVLG) form the signal peptide. Cystine bridges form between Cys-33–Cys-189 and Cys-55–Cys-59. An N-linked (GlcNAc...) asparagine glycan is attached at Asn-50. Asn-64, Asn-109, and Asn-172 each carry an N-linked (GlcNAc...) asparagine glycan.

It belongs to the EPO/TPO family. As to expression, produced by kidney or liver of adult mammals and by liver of fetal or neonatal mammals.

It is found in the secreted. Hormone involved in the regulation of erythrocyte proliferation and differentiation and the maintenance of a physiological level of circulating erythrocyte mass. Binds to EPOR leading to EPOR dimerization and JAK2 activation thereby activating specific downstream effectors, including STAT1 and STAT3. The sequence is that of Erythropoietin (EPO) from Sus scrofa (Pig).